The sequence spans 103 residues: Cytochrome c55X (103 aa).

The signal sequence occupies residues 1–17 (MARLALLLVLLAGTAVA). The heme c site is built by Cys-36, Cys-39, and His-40.

Binds 1 heme c group covalently per subunit.

Its subcellular location is the periplasm. In terms of biological role, monoheme c-type cytochrome. The sequence is that of Cytochrome c55X (nirC) from Paracoccus denitrificans (strain Pd 1222).